Consider the following 1274-residue polypeptide: Mediator of RNA polymerase II transcription subunit 14 (1274 aa).

Disordered stretches follow at residues 1-40 (MENG…KAHA), 1056-1142 (LVGT…LHTQ), and 1155-1274 (AQRQ…VVID). Basic and acidic residues predominate over residues 27-37 (AKREGSPDKGK). The span at 1075-1085 (QDLQQGPQKTP) shows a compositional bias: polar residues. A compositionally biased stretch (low complexity) spans 1090 to 1104 (AAQAAQAAQAAQAAQ). Over residues 1108–1119 (PQRPKQQPPTPS) the composition is skewed to pro residues. 3 stretches are compositionally biased toward low complexity: residues 1120–1142 (QPQQ…LHTQ), 1155–1172 (AQRQ…NNNT), and 1183–1252 (PQQR…PQGQ). The span at 1253 to 1265 (PGHGGGANGGMGG) shows a compositional bias: gly residues.

The protein belongs to the Mediator complex subunit 14 family. As to quaternary structure, component of the Mediator complex.

The protein resides in the nucleus. Functionally, component of the Mediator complex, a coactivator involved in the regulated transcription of nearly all RNA polymerase II-dependent genes. Mediator functions as a bridge to convey information from gene-specific regulatory proteins to the basal RNA polymerase II transcription machinery. Mediator is recruited to promoters by direct interactions with regulatory proteins and serves as a scaffold for the assembly of a functional preinitiation complex with RNA polymerase II and the general transcription factors. The sequence is that of Mediator of RNA polymerase II transcription subunit 14 (rgr1) from Neurospora crassa (strain ATCC 24698 / 74-OR23-1A / CBS 708.71 / DSM 1257 / FGSC 987).